Consider the following 179-residue polypeptide: Large ribosomal subunit protein uL5 (179 aa).

The protein belongs to the universal ribosomal protein uL5 family. As to quaternary structure, part of the 50S ribosomal subunit; part of the 5S rRNA/L5/L18/L25 subcomplex. Contacts the 5S rRNA and the P site tRNA. Forms a bridge to the 30S subunit in the 70S ribosome.

This is one of the proteins that bind and probably mediate the attachment of the 5S RNA into the large ribosomal subunit, where it forms part of the central protuberance. In the 70S ribosome it contacts protein S13 of the 30S subunit (bridge B1b), connecting the 2 subunits; this bridge is implicated in subunit movement. Contacts the P site tRNA; the 5S rRNA and some of its associated proteins might help stabilize positioning of ribosome-bound tRNAs. This Aromatoleum aromaticum (strain DSM 19018 / LMG 30748 / EbN1) (Azoarcus sp. (strain EbN1)) protein is Large ribosomal subunit protein uL5.